The primary structure comprises 305 residues: Homoserine kinase (305 aa).

90-100 lines the ATP pocket; sequence PLARGLGSSAS.

The protein belongs to the GHMP kinase family. Homoserine kinase subfamily.

The protein localises to the cytoplasm. It catalyses the reaction L-homoserine + ATP = O-phospho-L-homoserine + ADP + H(+). The protein operates within amino-acid biosynthesis; L-threonine biosynthesis; L-threonine from L-aspartate: step 4/5. Catalyzes the ATP-dependent phosphorylation of L-homoserine to L-homoserine phosphate. The chain is Homoserine kinase from Staphylococcus saprophyticus subsp. saprophyticus (strain ATCC 15305 / DSM 20229 / NCIMB 8711 / NCTC 7292 / S-41).